A 184-amino-acid polypeptide reads, in one-letter code: Photosystem I assembly protein Ycf4 (184 aa).

Helical transmembrane passes span 20 to 40 (GNFF…VVGI) and 64 to 84 (IVMS…WCTI).

The protein belongs to the Ycf4 family.

Its subcellular location is the plastid. It localises to the chloroplast thylakoid membrane. Seems to be required for the assembly of the photosystem I complex. This is Photosystem I assembly protein Ycf4 from Citrus sinensis (Sweet orange).